A 448-amino-acid chain; its full sequence is MILNNDVKLIPGSKVEAVIRISKKFVKSKYNEILQDYSSRLKVKGFRIGKVPFSIIEGKYSDNIRALTIEKLIHKSLEEFFKSATYKPLGYAVPKILDEKLEIDFSKDFEFTVVYEAYPEFELPDISNVEVEIPEVFVSDSDVEEELKLLQLENAIVVEDSGDVKSGSIVRVDFVELDDSLSEILTTKRQDFVFTVGESNNYYGFDNDIIGMKKDEEKIVEKNYGMDYKFSELANSFKRLKISLKDIKRRDIPKLDDDFAKDIKDSFNTLEDLKEHIRENMLRLVKERSESLKLSKLLSDIAEKLNIEIPSSMFEAEFKNVLNEFSHQNKINLEQLSNSSTGLEGINDVFKENVLKKLKSKLIFQKIVDNDLTEVTDSDLEDELVKQAEDAKMKLADIKKFYQEKNLLEILKDEIKRQKVKDKILKNVKEINPKKVAFRDFINYKTGE.

The PPIase FKBP-type domain occupies 167-253 (GSIVRVDFVE…LKDIKRRDIP (87 aa)).

It belongs to the FKBP-type PPIase family. Tig subfamily.

It localises to the cytoplasm. The enzyme catalyses [protein]-peptidylproline (omega=180) = [protein]-peptidylproline (omega=0). Its function is as follows. Involved in protein export. Acts as a chaperone by maintaining the newly synthesized protein in an open conformation. Functions as a peptidyl-prolyl cis-trans isomerase. The protein is Trigger factor of Borrelia turicatae (strain 91E135).